The chain runs to 396 residues: MINNKTVAEGRYYIGLMSGTSADGIDLALVDFTDKGQQPRLVASFYQSYSAIIADKITSLYQPGSNEIDRAFHLDVELAQLFSQAINALLNQEKLTPEDIIAIGNHGQTIRHRPSGDNPFTLQIGCCQTLATLTGIRVVGQFRRKDMALGGQGAPLVPIFHQQLFTQTTAANFVVNIGGIANITFLPTRDSNQAVLGFDTGPGNALLDDWFTKHHPNSDDCFDKNGAWATTGQVIPLLLEQLMQDDYINSAAPKSTGREYFHLEWLEQQLTAFKEATHSQHETVINHNADIQATLLAFTAQSISDAIMALTAQGKVYLCGGGVHNKALVEALSSRLTASDTVFEINTMQALNIDGDILEAMAFAWLAYAFDQGLDSNLPAVTGASASCTLGSAFLP.

Gly19–Asp26 contributes to the ATP binding site.

Belongs to the anhydro-N-acetylmuramic acid kinase family.

It catalyses the reaction 1,6-anhydro-N-acetyl-beta-muramate + ATP + H2O = N-acetyl-D-muramate 6-phosphate + ADP + H(+). The protein operates within amino-sugar metabolism; 1,6-anhydro-N-acetylmuramate degradation. It participates in cell wall biogenesis; peptidoglycan recycling. Its function is as follows. Catalyzes the specific phosphorylation of 1,6-anhydro-N-acetylmuramic acid (anhMurNAc) with the simultaneous cleavage of the 1,6-anhydro ring, generating MurNAc-6-P. Is required for the utilization of anhMurNAc either imported from the medium or derived from its own cell wall murein, and thus plays a role in cell wall recycling. The protein is Anhydro-N-acetylmuramic acid kinase of Colwellia psychrerythraea (strain 34H / ATCC BAA-681) (Vibrio psychroerythus).